A 704-amino-acid polypeptide reads, in one-letter code: Polyribonucleotide nucleotidyltransferase (704 aa).

Mg(2+) contacts are provided by Asp-487 and Asp-493. Residues 554–613 (PRLLTIKIHPDKIREVIGKGGSTIQAITKETGTQIDIQDDGTIIIASVNAIAAQAAKSRI) form the KH domain. One can recognise an S1 motif domain in the interval 623–691 (GRIYEGKVAK…KQGRIRLSIK (69 aa)).

Belongs to the polyribonucleotide nucleotidyltransferase family. Component of the RNA degradosome, which is a multiprotein complex involved in RNA processing and mRNA degradation. Mg(2+) serves as cofactor.

The protein resides in the cytoplasm. It carries out the reaction RNA(n+1) + phosphate = RNA(n) + a ribonucleoside 5'-diphosphate. Its function is as follows. Involved in mRNA degradation. Catalyzes the phosphorolysis of single-stranded polyribonucleotides processively in the 3'- to 5'-direction. The chain is Polyribonucleotide nucleotidyltransferase from Xanthomonas campestris pv. campestris (strain B100).